The sequence spans 194 residues: Calcium channel flower (194 aa).

3 helical membrane-spanning segments follow: residues 35–55, 66–88, and 107–127; these read LGIVAAFFAILFGLWNVFSII, IIQMVAGFVVMLLEALCCFVCFE, and GLYIAMAIPPIILCFGLASLF.

Belongs to the calcium channel flower family. Homomultimer. Associates with the dally/ magu complex.

The protein resides in the cell membrane. It localises to the cytoplasmic vesicle. Its subcellular location is the secretory vesicle. The protein localises to the synaptic vesicle membrane. It is found in the presynaptic cell membrane. The protein resides in the endosome. Its activity is regulated as follows. Channel activity is inhibited by La(3+), which reduces Ca(2+) influx and thus inhibits it's function in promoting activity-dependent bulk endocytosis (ADBE) in response to high stimuli. Its function is as follows. Transmembrane protein which mediates synaptic endocytosis, fitness-based cell culling, neuronal culling, morphogen gradient scaling, and calcium transport. Regulates synaptic endocytosis and hence couples exo- with endocytosis. Controls two major modes of synaptic vesicle (SV) endocytosis in the synaptic boutons of neuromuscular junctions (NMJs); Ca(2+) channel-independent Clathrin-mediated endocytosis (CME) in response to mild stimulation, and Ca(2+) channel-dependent activity-dependent bulk endocytosis (ADBE) in response to strong stimulation. Functions in ADBE and subsequent SV reformation from bulk endosomes by initiating Ca(2+) channel-dependent phosphatidylinositol 4,5-bisphosphate (PtdIns(4,5)P2) compartmentalization in synaptic boutons. There it acts at the periactive zone to provide the low Ca(2+) levels required to initiate Calcineurin activation and upregulate PtdIns(4,5)P2. Conversely PtdIns(4,5)P2 enhances fwe Ca(2+) channel-activity, establishing a positive feedback loop that induces PtdIns(4,5)P2 microdomain at the periactive zone. These microdomains trigger bulk membrane invagination (i.e. ADBE) by triggering actin polymerization while also promoting localization of fwe to bulk endosomes, thereby removing the ADBE trigger to reduce endocytosis and prevent excess membrane uptake. PtdIns(4,5)P2 then promotes SV reformation from the bulk endosomes, to coordinate ADBE and subsequent SV reformation. Different combinations of the flower isoforms at the cell membrane are also required for the identification and elimination of suboptimal or supernumerary cells during development, regeneration, and adulthood. Required for the recognition and elimination of unfit cells in the developing wing during cell competition. In the developing pupal retina, mediates the elimination of unwanted postmitotic neurons, including supernumerary photoreceptor neurons that form at the periphery of the retina and are contained within incomplete ommatidia units. Also required for efficient elimination and replacement of old neurons by newly generated neurons during regeneration in the adult brain following mechanical injury. Downstream of the flower fitness fingerprints, cells identified as unwanted or unfit are eliminated via apoptosis through the expression of ahuizotl (azot). However, the cells marked for elimination by the flower isoforms only undergo apoptosis if additional thresholds are met; (1) their neighboring fit/healthy cells express different levels of the fwe isoforms, and (2) the levels of the protective signal SPARC expressed by the loser or unwanted cells are unable to inhibit caspase activation. These additional thresholds for flower-mediated apoptosis, allows useful cells to recover from transient and limited stress before they are unnecessarily eliminated. Functions with dally and magu in a mechanism of scaling, which utilises apoptosis to ensure that the dpp morphogen gradient, which mediates organ growth, remains proportional to the size of the growing wing. In this mechanism, fwe represses dally- and Magu-dependent activity in expanding the gradient, and dally/Magu inhibits fwe-dependent apoptosis to keep cell death rate low. When the levels of these different proteins are optimally regulated the gradient correctly scales with organ growth but when this fails, fwe-mediated apoptosis is activated to trim the developing tissue to match the correct size of the gradient. The polypeptide is Calcium channel flower (Drosophila sechellia (Fruit fly)).